The following is a 96-amino-acid chain: UPF0235 protein YggU (96 aa).

The protein belongs to the UPF0235 family.

This chain is UPF0235 protein YggU, found in Salmonella newport (strain SL254).